The following is a 233-amino-acid chain: tRNA (guanine-N(7)-)-methyltransferase (233 aa).

Residues glutamate 64, glutamate 89, aspartate 116, and aspartate 138 each contribute to the S-adenosyl-L-methionine site. Aspartate 138 is a catalytic residue. Substrate contacts are provided by residues lysine 142, aspartate 174, and 212–215 (TRYE).

This sequence belongs to the class I-like SAM-binding methyltransferase superfamily. TrmB family.

It carries out the reaction guanosine(46) in tRNA + S-adenosyl-L-methionine = N(7)-methylguanosine(46) in tRNA + S-adenosyl-L-homocysteine. Its pathway is tRNA modification; N(7)-methylguanine-tRNA biosynthesis. In terms of biological role, catalyzes the formation of N(7)-methylguanine at position 46 (m7G46) in tRNA. The protein is tRNA (guanine-N(7)-)-methyltransferase of Rhizobium johnstonii (strain DSM 114642 / LMG 32736 / 3841) (Rhizobium leguminosarum bv. viciae).